A 302-amino-acid chain; its full sequence is DDRGK domain-containing protein 1 (302 aa).

Topologically, residues 1 to 5 are lumenal; sequence MDGGG. A helical membrane pass occupies residues 6–26; it reads GMLGAVVCLLLVFAIFPLLLW. The Cytoplasmic segment spans residues 27-302; that stretch reads RRRSDAAHRL…DENAAAGTEL (276 aa). Disordered regions lie at residues 36 to 151 and 279 to 302; these read LPPQ…EEAR and DLEPKPQYNEESNLDENAAAGTEL. The segment covering 79–91 has biased composition (acidic residues); it reads VDDADSDLEEEIQ. Residues 103–151 are compositionally biased toward basic and acidic residues; that stretch reads KRQDREAQRQAEEAARDSRRTKQDRYAEMRRKKDEEREAQERLMEEEAR.

This sequence belongs to the DDRGK1 family.

The protein resides in the endoplasmic reticulum membrane. Substrate adapter for ufmylation, the covalent attachment of the ubiquitin-like modifier UFM1 to substrate proteins. In Oryza sativa subsp. japonica (Rice), this protein is DDRGK domain-containing protein 1.